Consider the following 1059-residue polypeptide: Ubiquitin carboxyl-terminal hydrolase 36 (1059 aa).

Disordered regions lie at residues 22-45 and 102-145; these read LGGNSSAGSSTDQAKSGEDTNGSL and GKLV…KPKR. A compositionally biased stretch (polar residues) spans 23-45; the sequence is GGNSSAGSSTDQAKSGEDTNGSL. A compositionally biased stretch (low complexity) spans 121–138; sequence HPNNQSHHNHPHPTSNPN. The USP domain occupies 168-457; sequence TGMINVGNTC…NAYIMFFELD (290 aa). The active-site Nucleophile is the Cys-177. His-416 serves as the catalytic Proton acceptor. Disordered regions lie at residues 464–512, 554–853, 941–1005, and 1022–1059; these read PPAN…YTNG, ATSA…VTSN, RQRD…FYNQ, and FGGAGSAKFQQQRALQRHLSAGGGFSRRQPSAQQQQQT. Composition is skewed to low complexity over residues 479–494 and 561–580; these read STTPVPAATVSSPSPT and NGNKSSSPSSNSSSNHKSIN. Phosphoserine occurs at positions 490 and 492. Polar residues predominate over residues 603-615; sequence TTAQLPSMPNMTE. Phosphothreonine occurs at positions 632 and 636. Phosphoserine is present on residues Ser-646 and Ser-648. Positions 673–702 are enriched in polar residues; that stretch reads ESGQTNGHSKTNGSLTNGSASSSVHVNNSK. The segment covering 703-720 has biased composition (basic and acidic residues); that stretch reads QKTDAIDEIFKSLKKSAD. Ser-721 bears the Phosphoserine mark. The span at 721–730 shows a compositional bias: acidic residues; that stretch reads SEEDDDEEEP. Low complexity predominate over residues 740–750; sequence PQKQSQSQSKA. Positions 751-760 are enriched in pro residues; it reads PPSPKTPPSP. Ser-753 carries the phosphoserine modification. Thr-756 bears the Phosphothreonine mark. Ser-759 is modified (phosphoserine). Positions 779–788 are enriched in acidic residues; it reads DAIDDDDDAV. At Thr-799 the chain carries Phosphothreonine. Residues 806–818 show a composition bias toward polar residues; that stretch reads NPFSSSKPSTDSP. Ser-817 is subject to Phosphoserine. Phosphothreonine is present on Thr-820. The segment covering 833-853 has biased composition (polar residues); it reads ALKSHQQPRVGNGYQSNVTSN. Over residues 963 to 974 the composition is skewed to low complexity; it reads SGSAKGNNASNS.

The protein belongs to the peptidase C19 family. As to quaternary structure, interacts with atms/PAF1, but not with CycT.

It localises to the nucleus. It is found in the nucleolus. The enzyme catalyses Thiol-dependent hydrolysis of ester, thioester, amide, peptide and isopeptide bonds formed by the C-terminal Gly of ubiquitin (a 76-residue protein attached to proteins as an intracellular targeting signal).. Required for maintaining multiple types of adult stem cells, including male and female germline, epithelial follicle cell and intestinal stem cells. May function as a transcriptional repressor by continually deubiquiting histone H2B at the promoters of genes critical for cellular differentiation, thereby preventing histone H3 'Lys-4' trimethylation (H3K4). Controls selective autophagy activation by ubiquitinated proteins. The polypeptide is Ubiquitin carboxyl-terminal hydrolase 36 (Usp36) (Drosophila sechellia (Fruit fly)).